A 209-amino-acid chain; its full sequence is Uracil phosphoribosyltransferase (209 aa).

5-phospho-alpha-D-ribose 1-diphosphate contacts are provided by residues R79, R104, and 131–139; that span reads DPMLATANS. Uracil-binding positions include I194 and 199-201; that span reads GDA. Residue D200 coordinates 5-phospho-alpha-D-ribose 1-diphosphate.

This sequence belongs to the UPRTase family. The cofactor is Mg(2+).

The enzyme catalyses UMP + diphosphate = 5-phospho-alpha-D-ribose 1-diphosphate + uracil. It participates in pyrimidine metabolism; UMP biosynthesis via salvage pathway; UMP from uracil: step 1/1. Allosterically activated by GTP. Its function is as follows. Catalyzes the conversion of uracil and 5-phospho-alpha-D-ribose 1-diphosphate (PRPP) to UMP and diphosphate. In Mesorhizobium japonicum (strain LMG 29417 / CECT 9101 / MAFF 303099) (Mesorhizobium loti (strain MAFF 303099)), this protein is Uracil phosphoribosyltransferase.